The following is a 161-amino-acid chain: S-ribosylhomocysteine lyase (161 aa).

The Fe cation site is built by H57, H61, and C127.

Belongs to the LuxS family. As to quaternary structure, homodimer. Fe cation serves as cofactor.

It catalyses the reaction S-(5-deoxy-D-ribos-5-yl)-L-homocysteine = (S)-4,5-dihydroxypentane-2,3-dione + L-homocysteine. In terms of biological role, involved in the synthesis of autoinducer 2 (AI-2) which is secreted by bacteria and is used to communicate both the cell density and the metabolic potential of the environment. The regulation of gene expression in response to changes in cell density is called quorum sensing. Catalyzes the transformation of S-ribosylhomocysteine (RHC) to homocysteine (HC) and 4,5-dihydroxy-2,3-pentadione (DPD). The protein is S-ribosylhomocysteine lyase of Streptococcus equi subsp. zooepidemicus (strain H70).